A 443-amino-acid polypeptide reads, in one-letter code: ATP-dependent protease ATPase subunit HslU (443 aa).

ATP is bound by residues I18 and 60-65 (GVGKTE). The tract at residues 139–158 (AKNNWGQNETPAEPSSARQS) is disordered. Residues D256, E321, and R393 each coordinate ATP.

The protein belongs to the ClpX chaperone family. HslU subfamily. As to quaternary structure, a double ring-shaped homohexamer of HslV is capped on each side by a ring-shaped HslU homohexamer. The assembly of the HslU/HslV complex is dependent on binding of ATP.

Its subcellular location is the cytoplasm. Its function is as follows. ATPase subunit of a proteasome-like degradation complex; this subunit has chaperone activity. The binding of ATP and its subsequent hydrolysis by HslU are essential for unfolding of protein substrates subsequently hydrolyzed by HslV. HslU recognizes the N-terminal part of its protein substrates and unfolds these before they are guided to HslV for hydrolysis. The sequence is that of ATP-dependent protease ATPase subunit HslU from Erwinia tasmaniensis (strain DSM 17950 / CFBP 7177 / CIP 109463 / NCPPB 4357 / Et1/99).